Here is a 164-residue protein sequence, read N- to C-terminus: Cyclic pyranopterin monophosphate synthase (164 aa).

Substrate-binding positions include 75 to 77 (MAH) and 112 to 113 (ME). Residue D127 is part of the active site.

It belongs to the MoaC family. As to quaternary structure, homohexamer; trimer of dimers.

It catalyses the reaction (8S)-3',8-cyclo-7,8-dihydroguanosine 5'-triphosphate = cyclic pyranopterin phosphate + diphosphate. The protein operates within cofactor biosynthesis; molybdopterin biosynthesis. Catalyzes the conversion of (8S)-3',8-cyclo-7,8-dihydroguanosine 5'-triphosphate to cyclic pyranopterin monophosphate (cPMP). In Desulforamulus reducens (strain ATCC BAA-1160 / DSM 100696 / MI-1) (Desulfotomaculum reducens), this protein is Cyclic pyranopterin monophosphate synthase.